We begin with the raw amino-acid sequence, 467 residues long: Probable glutamate decarboxylase gamma (467 aa).

Position 278 is an N6-(pyridoxal phosphate)lysine (Lys278).

This sequence belongs to the group II decarboxylase family. Pyridoxal 5'-phosphate is required as a cofactor.

It carries out the reaction L-glutamate + H(+) = 4-aminobutanoate + CO2. The sequence is that of Probable glutamate decarboxylase gamma from Listeria innocua serovar 6a (strain ATCC BAA-680 / CLIP 11262).